Here is a 78-residue protein sequence, read N- to C-terminus: Protein Vpr (78 aa).

The segment at 1–42 (MEQAPEDQGPQRKPHNEWTLELLEELKNEAVRHFPRIWLHGL) is homooligomerization.

The protein belongs to the HIV-1 VPR protein family. As to quaternary structure, homooligomer, may form homodimer. Interacts with p6-gag region of the Pr55 Gag precursor protein through a (Leu-X-X)4 motif near the C-terminus of the P6gag protein. Interacts with host UNG. May interact with host RAD23A/HHR23A. Interacts with host VPRBP/DCAF1, leading to hijack the CUL4A-RBX1-DDB1-DCAF1/VPRBP complex, mediating ubiquitination of host proteins such as TERT and ZGPAT and arrest of the cell cycle in G2 phase. Phosphorylated on several residues by host. These phosphorylations regulate VPR activity for the nuclear import of the HIV-1 pre-integration complex.

The protein localises to the virion. It localises to the host nucleus. It is found in the host extracellular space. Functionally, during virus replication, may deplete host UNG protein, and incude G2-M cell cycle arrest. Acts by targeting specific host proteins for degradation by the 26S proteasome, through association with the cellular CUL4A-DDB1 E3 ligase complex by direct interaction with host VPRPB/DCAF-1. Cell cycle arrest reportedly occurs within hours of infection and is not blocked by antiviral agents, suggesting that it is initiated by the VPR carried into the virion. Additionally, VPR induces apoptosis in a cell cycle dependent manner suggesting that these two effects are mechanistically linked. Detected in the serum and cerebrospinal fluid of AIDS patient, VPR may also induce cell death to bystander cells. During virus entry, plays a role in the transport of the viral pre-integration (PIC) complex to the host nucleus. This function is crucial for viral infection of non-dividing macrophages. May act directly at the nuclear pore complex, by binding nucleoporins phenylalanine-glycine (FG)-repeat regions. The sequence is that of Protein Vpr from Homo sapiens (Human).